Here is a 244-residue protein sequence, read N- to C-terminus: uncharacterized protein (244 aa).

6 helical membrane passes run 22–42 (IMLQ…LLSF), 63–83 (FIFS…WGLT), 110–130 (VILL…EAFA), 140–160 (IMSL…NLTV), 186–206 (GVLF…IFQL), and 213–233 (AVFD…MLVV).

It localises to the cell membrane. This is an uncharacterized protein from Haemophilus influenzae (strain ATCC 51907 / DSM 11121 / KW20 / Rd).